The following is a 488-amino-acid chain: NAD-reducing hydrogenase HoxS subunit beta (488 aa).

The Ni(2+) site is built by cysteine 62, cysteine 65, cysteine 458, and cysteine 461.

Belongs to the [NiFe]/[NiFeSe] hydrogenase large subunit family. In terms of assembly, tetramer of an alpha and a gamma subunits (flavin-containing dimer), and a delta and a nickel-containing beta subunits (hydrogenase dimer). FMN serves as cofactor. The cofactor is Ni(2+).

Its subcellular location is the cytoplasm. The enzyme catalyses H2 + NAD(+) = NADH + H(+). This Cupriavidus necator (strain ATCC 17699 / DSM 428 / KCTC 22496 / NCIMB 10442 / H16 / Stanier 337) (Ralstonia eutropha) protein is NAD-reducing hydrogenase HoxS subunit beta (hoxH).